The following is a 306-amino-acid chain: Protein-methionine-sulfoxide reductase catalytic subunit MsrP (306 aa).

The tat-type signal signal peptide spans 1 to 44 (MLIRHAPDLTDNDVTGHGLYLRRRDFIGGAAGLGLMAAAGSASA). Residues Asn69, 72-73 (YE), Cys127, Thr162, Asn210, Arg215, and 226-228 (GIK) each bind Mo-molybdopterin.

The protein belongs to the MsrP family. In terms of assembly, heterodimer of a catalytic subunit (MsrP) and a heme-binding subunit (MsrQ). The cofactor is Mo-molybdopterin. In terms of processing, predicted to be exported by the Tat system. The position of the signal peptide cleavage has not been experimentally proven.

The protein resides in the periplasm. The catalysed reaction is L-methionyl-[protein] + a quinone + H2O = L-methionyl-(S)-S-oxide-[protein] + a quinol. It carries out the reaction L-methionyl-[protein] + a quinone + H2O = L-methionyl-(R)-S-oxide-[protein] + a quinol. Functionally, part of the MsrPQ system that repairs oxidized periplasmic proteins containing methionine sulfoxide residues (Met-O), using respiratory chain electrons. Thus protects these proteins from oxidative-stress damage caused by reactive species of oxygen and chlorine generated by the host defense mechanisms. MsrPQ is essential for the maintenance of envelope integrity under bleach stress, rescuing a wide series of structurally unrelated periplasmic proteins from methionine oxidation. The catalytic subunit MsrP is non-stereospecific, being able to reduce both (R-) and (S-) diastereoisomers of methionine sulfoxide. The chain is Protein-methionine-sulfoxide reductase catalytic subunit MsrP from Caulobacter sp. (strain K31).